The primary structure comprises 262 residues: Adenosylcobinamide-GDP ribazoletransferase (262 aa).

6 helical membrane passes run Tyr43–Gln63, Leu66–Phe86, Gly120–Leu140, Ala146–Phe166, Leu191–Leu211, and Ala242–Leu262.

The protein belongs to the CobS family. Mg(2+) serves as cofactor.

It localises to the cell inner membrane. It catalyses the reaction alpha-ribazole + adenosylcob(III)inamide-GDP = adenosylcob(III)alamin + GMP + H(+). The catalysed reaction is alpha-ribazole 5'-phosphate + adenosylcob(III)inamide-GDP = adenosylcob(III)alamin 5'-phosphate + GMP + H(+). It participates in cofactor biosynthesis; adenosylcobalamin biosynthesis; adenosylcobalamin from cob(II)yrinate a,c-diamide: step 7/7. Its function is as follows. Joins adenosylcobinamide-GDP and alpha-ribazole to generate adenosylcobalamin (Ado-cobalamin). Also synthesizes adenosylcobalamin 5'-phosphate from adenosylcobinamide-GDP and alpha-ribazole 5'-phosphate. The protein is Adenosylcobinamide-GDP ribazoletransferase of Shewanella baltica (strain OS155 / ATCC BAA-1091).